Here is a 260-residue protein sequence, read N- to C-terminus: Small ribosomal subunit protein uS2 (260 aa).

The disordered stretch occupies residues 224 to 260 (GRQGQDAGEDSAEKTFADTADGEGDFEESSNNENQEA). A compositionally biased stretch (acidic residues) spans 243-260 (ADGEGDFEESSNNENQEA).

It belongs to the universal ribosomal protein uS2 family.

This is Small ribosomal subunit protein uS2 from Oenococcus oeni (strain ATCC BAA-331 / PSU-1).